The following is a 255-amino-acid chain: Biotin carboxyl carrier protein of acetyl-CoA carboxylase 2, chloroplastic (255 aa).

The transit peptide at 1–87 directs the protein to the chloroplast; it reads MASLSVPCVK…TNVPEPAELS (87 aa). Residues 148–193 are disordered; that stretch reads PPAQPVALPPSPTPTSTPATAKPTSAPSSSHPPLKSPMAGTFYRSP. Pro residues predominate over residues 149 to 162; sequence PAQPVALPPSPTPT. Over residues 163–180 the composition is skewed to low complexity; the sequence is STPATAKPTSAPSSSHPP. One can recognise a Biotinyl-binding domain in the interval 178–254; that stretch reads HPPLKSPMAG…SVDTPLFVIA (77 aa). Lys-220 carries the post-translational modification N6-biotinyllysine.

As to quaternary structure, acetyl-CoA carboxylase is a heterohexamer composed of biotin carboxyl carrier protein, biotin carboxylase and 2 subunits each of ACCase subunit alpha and ACCase plastid-coded subunit beta (accD). Primarily expressed in 7 to 10 days after flowering seeds at levels approximately 2-fold less abundant than BCCP1.

The protein localises to the plastid. It is found in the chloroplast. It participates in lipid metabolism; fatty acid biosynthesis. Functionally, this protein is a component of the acetyl coenzyme A carboxylase complex; first, biotin carboxylase catalyzes the carboxylation of the carrier protein and then the transcarboxylase transfers the carboxyl group to form malonyl-CoA. In Arabidopsis thaliana (Mouse-ear cress), this protein is Biotin carboxyl carrier protein of acetyl-CoA carboxylase 2, chloroplastic (BCCP2).